Consider the following 155-residue polypeptide: Endoribonuclease YbeY (155 aa).

Positions 115, 119, and 125 each coordinate Zn(2+).

It belongs to the endoribonuclease YbeY family. Zn(2+) is required as a cofactor.

The protein resides in the cytoplasm. Its function is as follows. Single strand-specific metallo-endoribonuclease involved in late-stage 70S ribosome quality control and in maturation of the 3' terminus of the 16S rRNA. The polypeptide is Endoribonuclease YbeY (Polynucleobacter asymbioticus (strain DSM 18221 / CIP 109841 / QLW-P1DMWA-1) (Polynucleobacter necessarius subsp. asymbioticus)).